The chain runs to 126 residues: Profilin-2 (126 aa).

A Blocked amino end (Ser) modification is found at serine 2. Lysine 104 carries the N6,N6,N6-trimethyllysine modification.

Belongs to the profilin family. As to quaternary structure, occurs in many kinds of cells as a complex with monomeric actin in a 1:1 ratio.

It localises to the cytoplasm. The protein resides in the cytoskeleton. Its function is as follows. Binds to actin and affects the structure of the cytoskeleton. At high concentrations, profilin prevents the polymerization of actin, whereas it enhances it at low concentrations. By binding to PIP2, it inhibits the formation of IP3 and DG. In Acanthamoeba castellanii (Amoeba), this protein is Profilin-2.